The following is a 621-amino-acid chain: DEAD-box ATP-dependent RNA helicase 39 (621 aa).

The Q motif motif lies at 112-140; it reads ENFQELGLSEEVMGALQELNIEVPTEIQC. One can recognise a Helicase ATP-binding domain in the interval 143 to 330; sequence IPAVMERKSV…DEEFQGIEHL (188 aa). 156–163 provides a ligand contact to ATP; sequence SHTGSGKT. The DEAD box motif lies at 270–273; sequence DEAD. The Helicase C-terminal domain maps to 355-505; the sequence is KLEALLQVLE…LESLTTDNVR (151 aa). The disordered stretch occupies residues 497–621; that stretch reads ESLTTDNVRR…RGKSSSARAS (125 aa). Over residues 503–537 the composition is skewed to basic and acidic residues; that stretch reads NVRRDAARTHITQEKGRSVKQIREVSKQRNSRDKP. Low complexity predominate over residues 555-572; it reads KSSSSSFSKPRKASSPPE.

The protein belongs to the DEAD box helicase family.

The catalysed reaction is ATP + H2O = ADP + phosphate + H(+). The sequence is that of DEAD-box ATP-dependent RNA helicase 39 (RH39) from Arabidopsis thaliana (Mouse-ear cress).